A 176-amino-acid chain; its full sequence is DELTA-stichotoxin-She4a (176 aa).

Positions 2 to 11 (ELAGTIIDGA) are plays an important role in the hemolytic activity. Residues 10-29 (GASLTFEVLDKVLGELGKVS) form an N-terminal region region. S53, V86, S104, P106, Y132, Y136, and Y137 together coordinate phosphocholine. Positions 104–119 (SVPFDYNWYSNWWDVK) are trp-rich region, which is important for the binding to lipid membrane. Positions 142 to 144 (RGD) match the Cell attachment site motif.

As to quaternary structure, octamer or nonamer in membranes. Monomer in the soluble state.

The protein localises to the secreted. It is found in the nematocyst. The protein resides in the target cell membrane. In terms of biological role, pore-forming protein that forms cations-selective hydrophilic pores of around 1 nm and causes cardiac stimulation and cytolysis. Pore formation is a multi-step process that involves specific recognition of membrane sphingomyelin (but neither cholesterol nor phosphatidylcholine) using aromatic rich region and adjacent phosphocholine (POC) binding site, firm binding to the membrane (mainly driven by hydrophobic interactions) accompanied by the transfer of the N-terminal region to the lipid-water interface and finally pore formation after oligomerization of monomers. Cytolytic effects include red blood cells hemolysis, platelet aggregation and lysis, cytotoxic and cytostatic effects on fibroblasts. Lethality in mammals has been ascribed to severe vasospasm of coronary vessels, cardiac arrhythmia, and inotropic effects. The sequence is that of DELTA-stichotoxin-She4a from Stichodactyla helianthus (Sun anemone).